Reading from the N-terminus, the 411-residue chain is Imidazolonepropionase (411 aa).

2 residues coordinate Fe(3+): His-75 and His-77. Residues His-75 and His-77 each coordinate Zn(2+). Arg-84, Tyr-147, and His-180 together coordinate 4-imidazolone-5-propanoate. Residue Tyr-147 coordinates N-formimidoyl-L-glutamate. Residue His-245 coordinates Fe(3+). His-245 provides a ligand contact to Zn(2+). Gln-248 contributes to the 4-imidazolone-5-propanoate binding site. Fe(3+) is bound at residue Asp-320. Asp-320 serves as a coordination point for Zn(2+). Positions 322 and 324 each coordinate N-formimidoyl-L-glutamate. Position 325 (Thr-325) interacts with 4-imidazolone-5-propanoate.

Belongs to the metallo-dependent hydrolases superfamily. HutI family. Zn(2+) is required as a cofactor. It depends on Fe(3+) as a cofactor.

The protein localises to the cytoplasm. It catalyses the reaction 4-imidazolone-5-propanoate + H2O = N-formimidoyl-L-glutamate. The protein operates within amino-acid degradation; L-histidine degradation into L-glutamate; N-formimidoyl-L-glutamate from L-histidine: step 3/3. Functionally, catalyzes the hydrolytic cleavage of the carbon-nitrogen bond in imidazolone-5-propanoate to yield N-formimidoyl-L-glutamate. It is the third step in the universal histidine degradation pathway. The sequence is that of Imidazolonepropionase from Aeromonas hydrophila subsp. hydrophila (strain ATCC 7966 / DSM 30187 / BCRC 13018 / CCUG 14551 / JCM 1027 / KCTC 2358 / NCIMB 9240 / NCTC 8049).